A 160-amino-acid polypeptide reads, in one-letter code: Peptide methionine sulfoxide reductase MsrA (160 aa).

The active site involves C11.

Belongs to the MsrA Met sulfoxide reductase family.

The enzyme catalyses L-methionyl-[protein] + [thioredoxin]-disulfide + H2O = L-methionyl-(S)-S-oxide-[protein] + [thioredoxin]-dithiol. It catalyses the reaction [thioredoxin]-disulfide + L-methionine + H2O = L-methionine (S)-S-oxide + [thioredoxin]-dithiol. Has an important function as a repair enzyme for proteins that have been inactivated by oxidation. Catalyzes the reversible oxidation-reduction of methionine sulfoxide in proteins to methionine. This chain is Peptide methionine sulfoxide reductase MsrA, found in Malacoplasma penetrans (strain HF-2) (Mycoplasma penetrans).